Consider the following 433-residue polypeptide: Delta-aminolevulinic acid dehydratase, chloroplastic (433 aa).

Residues Met1–Ala56 constitute a chloroplast transit peptide. Residues Asn83 to Asn115 form a disordered region. The span at Ser86 to Lys95 shows a compositional bias: pro residues. Lys301 acts as the Schiff-base intermediate with substrate in catalysis. 2 residues coordinate 5-aminolevulinate: Arg311 and Lys323. Position 339 (Glu339) interacts with Mg(2+). Lys354 functions as the Schiff-base intermediate with substrate in the catalytic mechanism. The 5-aminolevulinate site is built by Ser380 and Tyr419.

The protein belongs to the ALAD family. In terms of assembly, homooctamer. Requires Mg(2+) as cofactor.

It localises to the plastid. The protein localises to the chloroplast. The enzyme catalyses 2 5-aminolevulinate = porphobilinogen + 2 H2O + H(+). The protein operates within porphyrin-containing compound metabolism; protoporphyrin-IX biosynthesis; coproporphyrinogen-III from 5-aminolevulinate: step 1/4. In terms of biological role, catalyzes an early step in the biosynthesis of tetrapyrroles. Binds two molecules of 5-aminolevulinate per subunit, each at a distinct site, and catalyzes their condensation to form porphobilinogen. The chain is Delta-aminolevulinic acid dehydratase, chloroplastic (HEMB) from Spinacia oleracea (Spinach).